The primary structure comprises 1041 residues: Leucine-rich repeat receptor-like protein kinase TDR (1041 aa).

An N-terminal signal peptide occupies residues 1 to 29; the sequence is MKKKNISPSLVLHPLLLLLLPFFAFNSLA. At 30-652 the chain is on the extracellular side; that stretch reads LKFSPQLLSL…HHKEERPKKT (623 aa). Cysteines 69 and 76 form a disulfide. Residues Asn78, Asn92, and Asn111 are each glycosylated (N-linked (GlcNAc...) asparagine). 21 LRR repeats span residues 80-104, 105-128, 130-152, 154-176, 177-199, 200-224, 225-248, 250-272, 273-296, 297-319, 321-344, 345-368, 369-392, 394-416, 418-439, 440-464, 466-488, 511-535, 536-558, 559-583, and 585-607; these read TAQV…IRYL, SSLL…IFDL, KLTT…ISKL, FLKV…VSRL, RFLE…AYGG, LQRL…LGLL, TELQ…FALL, NLKY…LGNL, SNLE…YSNL, KSLK…GFST, KNLT…IGEL, PELT…LGSN, GKLE…LCHG, KLYK…LTRC, SLWR…GFGS, LRNL…FATA, VLQY…IWKA, CKSF…IGHC, EKLL…EIST, LPSI…FGSS, and TITT…SFAH. Residues 186–188 are CLE peptide binding; that stretch reads GSY. A CLE peptide binding region spans residues 233–235; that stretch reads GYN. Asn258 and Asn271 each carry an N-linked (GlcNAc...) asparagine glycan. Residues 303-307 are CLE peptide binding; sequence DFSSN. Asn322, Asn332, and Asn356 each carry an N-linked (GlcNAc...) asparagine glycan. The CLE peptide binding stretch occupies residues 375 to 377; that stretch reads DVS. Asn378 is a glycosylation site (N-linked (GlcNAc...) asparagine). The cysteines at positions 390 and 416 are disulfide-linked. Residues 421–423 form a CLE peptide binding region; that stretch reads RFR. Residues Asn430, Asn442, Asn471, Asn525, and Asn542 are each glycosylated (N-linked (GlcNAc...) asparagine). A disulfide bridge connects residues Cys511 and Cys535. The N-linked (GlcNAc...) asparagine glycan is linked to Asn590. A disulfide bridge links Cys620 with Cys628. The helical transmembrane segment at 653–673 threads the bilayer; it reads AGAIVWILAAAIGVGFFVLVA. Residues 674–1041 lie on the Cytoplasmic side of the membrane; it reads ATRCFQKSYG…HDVKCQRIGV (368 aa). The residue at position 710 (Thr710) is a Phosphothreonine. In terms of domain architecture, Protein kinase spans 719 to 1001; sequence SKTDNILGMG…DVLLILQEAK (283 aa). ATP is bound by residues 725-733 and Lys747; that span reads LGMGSTGTV. Phosphotyrosine is present on residues Tyr798 and Tyr839. Residue Asp852 is the Proton acceptor of the active site. The residue at position 884 (Ser884) is a Phosphoserine. Phosphotyrosine is present on residues Tyr892 and Tyr899. Thr900 is subject to Phosphothreonine.

Belongs to the protein kinase superfamily. Ser/Thr protein kinase family. In terms of assembly, interacts specifically with the mature peptides CLE41p and CLE44p, especially in the presence of SERK2. Interacts with LURE1.2. In terms of tissue distribution, widely expressed along the vascular strands. In roots and hypocotyls, confined to procambial cells.

It is found in the cell membrane. The enzyme catalyses L-seryl-[protein] + ATP = O-phospho-L-seryl-[protein] + ADP + H(+). It catalyses the reaction L-threonyl-[protein] + ATP = O-phospho-L-threonyl-[protein] + ADP + H(+). Functionally, acts with CLE41p and CLE44p peptides as a ligand-receptor pair in a signal transduction pathway involved in the regulation of procambium maintenance and polarity during vascular-tissue development. Mediates repression of tracheary element differentiation and the promotion of procambial cells formation and polar division adjacent to phloem cells in the veins. The protein is Leucine-rich repeat receptor-like protein kinase TDR of Arabidopsis thaliana (Mouse-ear cress).